Reading from the N-terminus, the 484-residue chain is Threonine synthase-like 2 (484 aa).

At Lys-113 the chain carries N6-(pyridoxal phosphate)lysine.

Belongs to the threonine synthase family. It depends on pyridoxal 5'-phosphate as a cofactor.

It localises to the secreted. Acts as a catabolic phospho-lyase on both gamma- and beta-phosphorylated substrates. Degrades O-phospho-threonine (PThr) to alpha-ketobutyrate, ammonia and phosphate. Its function is as follows. Potent inducer of osteoblastic production of IL6. May act to exacerbate inflammation and/or bone turnover under inflammatory conditions. The sequence is that of Threonine synthase-like 2 (THNSL2) from Homo sapiens (Human).